We begin with the raw amino-acid sequence, 115 residues long: Protein Diedel (115 aa).

The first 24 residues, 1–24, serve as a signal peptide directing secretion; that stretch reads MASPVVSLLLVGICALAFVHVARS. Cystine bridges form between Cys26–Cys81, Cys27–Cys87, Cys42–Cys55, Cys60–Cys71, and Cys76–Cys83.

Belongs to the Diedel family. As to expression, detected in hemolymph (at protein level). Also expressed in the fat body and is probably synthesized in the fat body and secreted into the hemolymph.

Its subcellular location is the secreted. Its function is as follows. Cytokine which promotes survival following infection by Sindbis virus by suppressing the immune deficiency pathway. Following infection by the enteropathogenic bacteria E.carotovora limits intestinal stem cells proliferation. When secreted from muscle or adipose tissue, can attenuate age-related intestinal tissue degeneration by inhibiting apoptosis. This is Protein Diedel from Drosophila melanogaster (Fruit fly).